The primary structure comprises 123 residues: Holo-[acyl-carrier-protein] synthase (123 aa).

The Mg(2+) site is built by Asp-8 and Glu-56.

The protein belongs to the P-Pant transferase superfamily. AcpS family. Mg(2+) serves as cofactor.

The protein resides in the cytoplasm. The catalysed reaction is apo-[ACP] + CoA = holo-[ACP] + adenosine 3',5'-bisphosphate + H(+). Transfers the 4'-phosphopantetheine moiety from coenzyme A to a Ser of acyl-carrier-protein. This is Holo-[acyl-carrier-protein] synthase from Treponema denticola (strain ATCC 35405 / DSM 14222 / CIP 103919 / JCM 8153 / KCTC 15104).